The chain runs to 141 residues: Hemoglobin subunit alpha (141 aa).

The Globin domain occupies 1 to 141 (VLSPADKTNV…VSTVLTSKYR (141 aa)). Phosphoserine is present on Ser3. An N6-succinyllysine modification is found at Lys7. Thr8 carries the post-translational modification Phosphothreonine. The residue at position 11 (Lys11) is an N6-succinyllysine. Residue Lys16 is modified to N6-acetyllysine; alternate. Lys16 is subject to N6-succinyllysine; alternate. Residue Tyr24 is modified to Phosphotyrosine. Position 40 is an N6-succinyllysine (Lys40). Residue His58 coordinates O2. His87 lines the heme b pocket. Phosphoserine is present on Ser102. Residue Thr108 is modified to Phosphothreonine. Phosphoserine occurs at positions 124 and 131. Thr134 and Thr137 each carry phosphothreonine. Residue Ser138 is modified to Phosphoserine.

Belongs to the globin family. In terms of assembly, heterotetramer of two alpha chains and two beta chains. As to expression, red blood cells.

Its function is as follows. Involved in oxygen transport from the lung to the various peripheral tissues. In terms of biological role, hemopressin acts as an antagonist peptide of the cannabinoid receptor CNR1. Hemopressin-binding efficiently blocks cannabinoid receptor CNR1 and subsequent signaling. This Tursiops truncatus (Atlantic bottle-nosed dolphin) protein is Hemoglobin subunit alpha (HBA).